The chain runs to 217 residues: Methylthioribulose-1-phosphate dehydratase (217 aa).

2 residues coordinate Zn(2+): histidine 106 and histidine 108.

It belongs to the aldolase class II family. MtnB subfamily. It depends on Zn(2+) as a cofactor.

The enzyme catalyses 5-(methylsulfanyl)-D-ribulose 1-phosphate = 5-methylsulfanyl-2,3-dioxopentyl phosphate + H2O. It participates in amino-acid biosynthesis; L-methionine biosynthesis via salvage pathway; L-methionine from S-methyl-5-thio-alpha-D-ribose 1-phosphate: step 2/6. Functionally, catalyzes the dehydration of methylthioribulose-1-phosphate (MTRu-1-P) into 2,3-diketo-5-methylthiopentyl-1-phosphate (DK-MTP-1-P). This is Methylthioribulose-1-phosphate dehydratase from Xanthomonas campestris pv. campestris (strain B100).